The primary structure comprises 288 residues: uncharacterized protein (288 aa).

One can recognise an ATP-grasp domain in the interval 107 to 288 (KQIPTLIGPQ…LAIQLLASIA (182 aa)). ATP is bound by residues K145 and 178–188 (QQYIATSNSEA). Mg(2+) is bound by residues D248, E261, and N263. The Mn(2+) site is built by D248, E261, and N263.

The protein belongs to the RimK family.

This is an uncharacterized protein from Mycoplasma pneumoniae (strain ATCC 29342 / M129 / Subtype 1) (Mycoplasmoides pneumoniae).